The following is a 44-amino-acid chain: MNDFEKNVQSKRNDAVDSAVGFVVSFGFFAFLFVMATVIHLVGS.

Residues 19-39 (AVGFVVSFGFFAFLFVMATVI) form a helical membrane-spanning segment.

The protein localises to the cell membrane. This is an uncharacterized protein from Bacillus subtilis (strain 168).